The sequence spans 500 residues: AAA-ATPase At3g28580 (500 aa).

The chain crosses the membrane as a helical span at residues 7–29 (LWTNTGSALATLMFVYTIFKQFF). A disordered region spans residues 174–193 (NRERKLYSNTPGQSHGNNSK). The span at 180-193 (YSNTPGQSHGNNSK) shows a compositional bias: polar residues. 247-254 (GPPGTGKS) contributes to the ATP binding site. Positions 462–500 (KEEAKKKVEEEEEEKQRKKEKVKEIEAEKEKKKKIEEEN) are disordered.

This sequence belongs to the AAA ATPase family. BCS1 subfamily. Mg(2+) is required as a cofactor.

The protein resides in the membrane. It carries out the reaction ATP + H2O = ADP + phosphate + H(+). This is AAA-ATPase At3g28580 from Arabidopsis thaliana (Mouse-ear cress).